We begin with the raw amino-acid sequence, 524 residues long: Cytochrome P450 CYP749A22 (524 aa).

A helical membrane pass occupies residues 12–32 (TPILFQFLLSSLCVFLLFVFI). A heme-binding site is contributed by Cys-472.

Belongs to the cytochrome P450 family. Heme serves as cofactor.

The protein localises to the membrane. Its function is as follows. Probable heme-thiolate monooxygenase. This is Cytochrome P450 CYP749A22 from Panax ginseng (Korean ginseng).